The sequence spans 389 residues: MACPYRSSAYTNGDHAQKGEVLGSEMGMLYGEYLMLNQIINSQRMQSVVSNRPVHDEHLFIITHQAYELWFKQIIYELDSIRDLFNTITVDESRTLDILKRLNRIVMILKLLVDHIPILETMTPLDFMDFRGYLSPASGFQSLQFRLLENKLGVKQEHRVKYNQKYQDVFGDDAKSLDMLTASEDEPSLCDLVQKWLERTPGLEESGFNFYQKFRSNVYELLDREEQKAKMQPLEHIRNYQLMDIKKRRDVYHTIFNEDAHEALVSRGERKFSYKAMQGAILITLYRDEPRFSQPHQLLNCLMDIDSFMTKWRYNHVMMVQRMIGSQQLGTGGSSGYQYLRSTLSDRYKVSLDLFNLSTFLIPRSNIPPLTEEMSNQLNTNTRTIKPTN.

Residues 60–64 (FIITH) and Arg-131 each bind substrate. His-316 lines the heme pocket. Thr-331 lines the substrate pocket.

It belongs to the tryptophan 2,3-dioxygenase family. Homotetramer. Dimer of dimers. Heme serves as cofactor.

It catalyses the reaction L-tryptophan + O2 = N-formyl-L-kynurenine. The protein operates within amino-acid degradation; L-tryptophan degradation via kynurenine pathway; L-kynurenine from L-tryptophan: step 1/2. It functions in the pathway pigment biosynthesis; ommochrome biosynthesis. Functionally, heme-dependent dioxygenase that catalyzes the oxidative cleavage of the L-tryptophan (L-Trp) pyrrole ring and converts L-tryptophan to N-formyl-L-kynurenine. Catalyzes the oxidative cleavage of the indole moiety. The polypeptide is Tryptophan 2,3-dioxygenase (Mayetiola destructor (Hessian fly)).